The chain runs to 165 residues: MKFKLNFHEKINQKDCWQSLIDHKERSYSLDFVNNTEKELPLIYGYEVKDFENHGVKIGYTTCKPSDKIQSAIEERILSQEKEFRFLDENIEKIEEVKVIFWAIAINEKDESFKDYSLHSFIKEKNLLKESQAGGEWFIVDENKDKFEYLSQIFRQFRAPSLFKK.

Functionally, corresponds to the N-terminus of a putative G subtype type II restriction/methylase subunit. This is Putative type II restriction enzyme and methyltransferase RM.MpnORF109P N-terminus from Mycoplasma pneumoniae (strain ATCC 29342 / M129 / Subtype 1) (Mycoplasmoides pneumoniae).